A 44-amino-acid chain; its full sequence is Alpha-amylase inhibitor magnificamide (44 aa).

Intrachain disulfides connect C6–C38, C16–C33, and C20–C39. The segment at 7-10 (YIYH) is inhibitory motif.

The protein belongs to the sea anemone alpha-amylase inhibitor family.

The protein resides in the secreted. Its function is as follows. Mammalian alpha-amylase (AMY2A) inhibitor. The recombinant peptide inhibits porcine pancreatic (Ki=0.17 nM) and human saliva alpha-amylases (Ki=7.7 nM). It does not show antimicrobial (tested on fungi and bacteria) or channel modulating activities (tested on 18 voltage-gated sodium and potassium channles). This Heteractis magnifica (Magnificent sea anemone) protein is Alpha-amylase inhibitor magnificamide.